The sequence spans 193 residues: Adenylate kinase (193 aa).

Position 11 to 16 (11 to 16) interacts with ATP; sequence GSGKGT. An NMP region spans residues 31–60; that stretch reads STGDIFRANVKGETPLGLEAKKYMDAGDYV. Residues Thr-32, Arg-37, 58 to 60, 86 to 89, and Gln-93 contribute to the AMP site; these read DYV and GYPR. Residues 127 to 137 form an LID region; the sequence is GRAKESGRSDD. Arg-128 contributes to the ATP binding site. AMP is bound by residues Arg-134 and Arg-145. Residue Gly-173 participates in ATP binding.

Belongs to the adenylate kinase family. Monomer.

The protein localises to the cytoplasm. It catalyses the reaction AMP + ATP = 2 ADP. It participates in purine metabolism; AMP biosynthesis via salvage pathway; AMP from ADP: step 1/1. In terms of biological role, catalyzes the reversible transfer of the terminal phosphate group between ATP and AMP. Plays an important role in cellular energy homeostasis and in adenine nucleotide metabolism. The protein is Adenylate kinase of Renibacterium salmoninarum (strain ATCC 33209 / DSM 20767 / JCM 11484 / NBRC 15589 / NCIMB 2235).